The sequence spans 530 residues: Transcription factor SPT20 homolog (530 aa).

Serine 296 bears the Phosphoserine mark. Residues 419–530 are disordered; it reads CPVKMSHSSS…PASSSQRHES (112 aa). 2 stretches are compositionally biased toward low complexity: residues 424 to 436 and 466 to 475; these read SHSS…LNSG and SSSGNSSSGN. Phosphothreonine is present on threonine 490. Positions 514–530 are enriched in low complexity; sequence LSPAALSPASSSQRHES. Phosphoserine occurs at positions 515 and 520.

It belongs to the SPT20 family. In terms of assembly, interacts with ATG9A. Interacts with MAPK14.

In terms of biological role, required for MAP kinase p38 (MAPK11, MAPK12, MAPK13 and/or MAPK14) activation during gastrulation. Required for down-regulation of E-cadherin during gastrulation by regulating E-cadherin protein level downstream from NCK-interacting kinase (NIK) and independently of the regulation of transcription by FGF signaling and Snail. Required for starvation-induced ATG9A trafficking during autophagy. The sequence is that of Transcription factor SPT20 homolog (Supt20h) from Rattus norvegicus (Rat).